A 511-amino-acid chain; its full sequence is Potassium voltage-gated channel subfamily A member 10 (511 aa).

Residues 22–50 form a disordered region; that stretch reads IQEEPGYATDFDSTSPKGRPGGSSFSNGK. The chain crosses the membrane as a helical span at residues 218–238; sequence VAVVSVLVVVISITIFCLETL. N256 carries N-linked (GlcNAc...) asparagine glycosylation. The chain crosses the membrane as a helical span at residues 271–292; the sequence is FFMVESTCIVWFTFELVLRFVV. C293 carries the S-palmitoyl cysteine lipid modification. Residues 303 to 323 form a helical membrane-spanning segment; sequence IMNIIDIISIIPYFATLITEL. N334 carries an N-linked (GlcNAc...) asparagine glycan. Residues 339–358 form a helical; Voltage-sensor membrane-spanning segment; it reads ILRIIRLVRVFRIFKLSRHS. Residues 375–395 form a helical membrane-spanning segment; sequence LGLLIFFLFIGVILFSSAVYF. A Selectivity filter motif is present at residues 421 to 426; that stretch reads TVGYGD. Residues 436-456 traverse the membrane as a helical segment; that stretch reads IVGTLCAIAGVLTIALPVPVI. The segment at 489-511 is disordered; it reads SRMGSTDSLNKTNGGCSTEKSRK. N498 carries an N-linked (GlcNAc...) asparagine glycan.

It belongs to the potassium channel family. A (Shaker) (TC 1.A.1.2) subfamily. Kv1.8/KCNA10 sub-subfamily. As to quaternary structure, homotetramer. Interacts with KCN4B/POMP. Interaction with KCN4B/POMP is necessary for the modulation of channel activity by cAMP. Detected in kidney, in proximal tubules, glomerular endothelium, in vascular endothelium and in smooth muscle cells.

It is found in the membrane. The enzyme catalyses K(+)(in) = K(+)(out). With respect to regulation, the channel activity is up-regulated by cAMP. Its function is as follows. Voltage-gated potassium ion channel that mediates K(+) permeability of excitable membranes. When opened in response to the voltage difference across the membrane, KCNA10 channel selectively allows the flow of potassium ions across the membrane down their electrochemical gradient. This Homo sapiens (Human) protein is Potassium voltage-gated channel subfamily A member 10.